Reading from the N-terminus, the 213-residue chain is Ribonuclease Oy (213 aa).

Residue His-35 is part of the active site. Cys-51 and Cys-96 are oxidised to a cystine. Asn-52 carries an N-linked (GlcNAc...) asparagine glycan. Catalysis depends on residues Glu-89 and His-93. N-linked (GlcNAc...) asparagine glycosylation is found at Asn-121 and Asn-142. Cystine bridges form between Cys-160-Cys-198 and Cys-178-Cys-188.

The protein belongs to the RNase T2 family.

The protein localises to the secreted. In terms of biological role, releases mononucleotides from RNA in the order of 3'-GMP, 3'-AMP and 3'-UMP. The polypeptide is Ribonuclease Oy (Magallana gigas (Pacific oyster)).